The following is a 56-amino-acid chain: PI-stichotoxin-Hcr2o (56 aa).

A BPTI/Kunitz inhibitor domain is found at 4 to 54 (CLEPKVVGPCKARIRRFYFDSETGKCTPFIYGGCGGNGNNFETLHACRAIC). 3 disulfides stabilise this stretch: Cys-4/Cys-54, Cys-13/Cys-37, and Cys-29/Cys-50.

It belongs to the venom Kunitz-type family. Sea anemone type 2 potassium channel toxin subfamily.

It localises to the secreted. It is found in the nematocyst. Functionally, this recombinant serine protease inhibitor inhibits both trypsin (Ki=21 nM) and chymotrypsin (Ki=500 nM). It possesses anti-inflammatory activity in vitro. It inhibits macrophage LPS-induced nitric oxide synthesis, and blocks histamine influence on intracellular calcium concentration in murine bone marrow-derived macrophages, which can indicate inhibition of H1-histamine receptor (HRH1). In vitro, it shows cytoprotective activity in the oxidative stress agent 6-hydroxydopamine (6-OHDA)-induced neurotoxicity model. In this model, it decreases reactive oxygen species (ROS) levels, and increases cell viability in a correlated manner. It is possible that the observed effect is due to the ability of this peptides to act as free-radical scavenger. In vivo, it shows analgesic activity, since it increases hot plate and tail flick withdrawal latencies, when using a mice thermal pain stimulation model. The chain is PI-stichotoxin-Hcr2o from Radianthus crispa (Leathery sea anemone).